The following is a 193-amino-acid chain: CASP-like protein 2U1 (193 aa).

Over 1–18 (MAMALALGGGQDAERKVK) the chain is Cytoplasmic. A helical transmembrane segment spans residues 19–39 (VAEVALRALLCGLGALAAALV). Topologically, residues 40–61 (ATDTQTRTFFSLQKKASYTDMK) are extracellular. A helical membrane pass occupies residues 62–82 (AMVFLVDAAAVAAGYSLLQLA). The Cytoplasmic segment spans residues 83–113 (ARCCGGGAMSSGRGDGGGRGRALSWCVFSCD). A helical membrane pass occupies residues 114-134 (QALAYVLLAAVAAALQASVVA). The Extracellular portion of the chain corresponds to 135 to 156 (KRGQPELQWMGICALYGAFCRQ). Residues 157-177 (AGAGLATAVVAGLAAVLLAFL) form a helical membrane-spanning segment. Over 178–193 (SAFNLFRLYGSGGTKS) the chain is Cytoplasmic.

Belongs to the Casparian strip membrane proteins (CASP) family. Homodimer and heterodimers.

Its subcellular location is the cell membrane. This chain is CASP-like protein 2U1, found in Sorghum bicolor (Sorghum).